A 378-amino-acid polypeptide reads, in one-letter code: MENNRLSQDEIDALLNGTGSTLDEPEIPEVDDLSEMERDAIGEIGNISFGSSATALSTLLNQKVDITTPSVTVIPRSKISDAFPEPYVAIEVNYTEGFSGSNLLVVEQSDAAIIADLMIGGDGKGADPSLGEIHLSAVQEAMNQMMGSAATSMSTVFSKKIDISPPRVELLDVTEEKGTDRIPDDEMLVKVSFNLKVGELIDSSIMQLYPLTFAKDLISSLMNSESAEEEETVQPEVTYEQPKEPVTPEPRIEPKQQQQPPKRQGTAKKAAPVQVSPVEFSAFDPNEAVQAPIHNLDMLLDIPLSITVELGRTKRSVKEILELSAGSIIELDKLAGEPVDILVNQRIVAKGEVVVIEENFGVRVTDILSQAERINNLK.

Positions 225–271 (ESAEEEETVQPEVTYEQPKEPVTPEPRIEPKQQQQPPKRQGTAKKAA) are disordered. Residues 255 to 264 (KQQQQPPKRQ) are compositionally biased toward low complexity.

This sequence belongs to the FliN/MopA/SpaO family.

It is found in the cell membrane. Its function is as follows. Component of the flagellar switch. Binds CheY-P and increases its hydrolysis rate in vitro. May function constitutively to remove CheY-P around the flagellar switch to maintain an optimal level of CheY-P whereas CheC may function after addition of an attractant to cope with increased levels of CheY-P. The polypeptide is Flagellar motor switch phosphatase FliY (fliY) (Bacillus subtilis (strain 168)).